We begin with the raw amino-acid sequence, 462 residues long: NEDD8-activating enzyme E1 catalytic subunit (462 aa).

Ala-2 bears the N-acetylalanine mark. An interaction with UBE2M N-terminus region spans residues His-53 to Cys-70. Residues Asp-100 to Lys-124 and Ile-148 to Ala-171 each bind ATP. Interaction with UBE2M N-terminus stretches follow at residues Arg-157–Ile-161 and Pro-192–Met-217. The interval Leu-227–Pro-229 is interaction with NEDD8. Cys-237 (glycyl thioester intermediate) is an active-site residue. Interaction with NAE1 regions lie at residues Met-242–His-248 and Tyr-292–Arg-295. Residues Ile-331–Pro-338 are interaction with UBE2M N-terminus. The interaction with NEDD8 stretch occupies residues Tyr-352–Glu-357. The segment at Ser-368–Thr-462 is interaction with UBE2M core domain.

Belongs to the ubiquitin-activating E1 family. UBA3 subfamily. As to quaternary structure, heterodimer of UBA3 and NAE1. Interacts with NEDD8, UBE2F and UBE2M. Binds ESR1 and ESR2 with bound steroid ligand. Interacts with TBATA.

It catalyses the reaction ATP + [NEDD8 protein] + [E1 NEDD8-activating enzyme]-L-cysteine = AMP + diphosphate + [E1 NEDD8-activating enzyme]-S-[NEDD8 protein]-yl-L-cysteine.. The protein operates within protein modification; protein neddylation. Its activity is regulated as follows. Binding of TP53BP2 to the regulatory subunit NAE1 decreases activity. Its function is as follows. Catalytic subunit of the dimeric UBA3-NAE1 E1 enzyme. E1 activates NEDD8 by first adenylating its C-terminal glycine residue with ATP, thereafter linking this residue to the side chain of the catalytic cysteine, yielding a NEDD8-UBA3 thioester and free AMP. E1 finally transfers NEDD8 to the catalytic cysteine of UBE2M. Down-regulates steroid receptor activity. Necessary for cell cycle progression. This chain is NEDD8-activating enzyme E1 catalytic subunit (Uba3), found in Mus musculus (Mouse).